Reading from the N-terminus, the 908-residue chain is PTS system glucose-specific EIICBA component (908 aa).

The region spanning 1–264 is the PTS EIIC type-1; first part domain; sequence MQISLVKIRN…YAPLWYTSAG (264 aa). 5 helical membrane passes run 31–51, 71–91, 100–120, 155–175, and 189–209; these read LMIPIAVLPLAGIFLGIGDAI, GGNVVFANLPILFAVAIAITF, FSAFVFWATMNAFMSSLIIPV, VFGGIIVGALTAYLYNKFYAI, and FVPIICMTIAIPVALLLLMVW. The unknown stretch occupies residues 265-450; it reads GSLQEIANQQ…VSQFTVAVPS (186 aa). The region spanning 451–602 is the PTS EIIC type-1; second part domain; that stretch reads LNPAQYSQGK…FNLATPGRGG (152 aa). The next 5 helical transmembrane spans lie at 459 to 479, 487 to 507, 509 to 529, 536 to 556, and 571 to 591; these read GKFPFMLIGIPAAGLAMILAA, ASSIIGSAAFTSFLTGITEPF, FTFLFLAPWLFYGIHAVLAAV, LLSANVGQTFSGSFIDFILYG, and VPIIGIFLALIYFPTFYFLTI. Residues 631–713 enclose the PTS EIIB type-1 domain; it reads QIEAGMLLRA…QDIIQGKVNW (83 aa). Cys-653 (phosphocysteine intermediate; for EIIB activity) is an active-site residue. A PTS EIIA type-1 domain is found at 762–875; it reads DDTFKNRLVG…DPITPFIVMQ (114 aa). His-815 functions as the Tele-phosphohistidine intermediate; for EIIA activity in the catalytic mechanism.

Its subcellular location is the cell membrane. The enzyme catalyses N(pros)-phospho-L-histidyl-[protein] + D-glucose(out) = D-glucose 6-phosphate(in) + L-histidyl-[protein]. Its function is as follows. The phosphoenolpyruvate-dependent sugar phosphotransferase system (sugar PTS), a major carbohydrate active transport system, catalyzes the phosphorylation of incoming sugar substrates concomitantly with their translocation across the cell membrane. This system is involved in glucose transport. This chain is PTS system glucose-specific EIICBA component (ptsG), found in Mycoplasma genitalium (strain ATCC 33530 / DSM 19775 / NCTC 10195 / G37) (Mycoplasmoides genitalium).